A 435-amino-acid chain; its full sequence is Trigger factor (435 aa).

Residues 162-247 (GDRVIIDFKG…VKNVAEATLP (86 aa)) form the PPIase FKBP-type domain.

This sequence belongs to the FKBP-type PPIase family. Tig subfamily.

Its subcellular location is the cytoplasm. It catalyses the reaction [protein]-peptidylproline (omega=180) = [protein]-peptidylproline (omega=0). Functionally, involved in protein export. Acts as a chaperone by maintaining the newly synthesized protein in an open conformation. Functions as a peptidyl-prolyl cis-trans isomerase. This chain is Trigger factor, found in Chromobacterium violaceum (strain ATCC 12472 / DSM 30191 / JCM 1249 / CCUG 213 / NBRC 12614 / NCIMB 9131 / NCTC 9757 / MK).